The chain runs to 173 residues: Photosystem I assembly protein Ycf3 (173 aa).

3 TPR repeats span residues 35-68 (AFAY…EDDP), 72-105 (SYIL…NPRM), and 120-153 (GEKA…APNN).

This sequence belongs to the Ycf3 family.

It localises to the cellular thylakoid membrane. Its function is as follows. Essential for the assembly of the photosystem I (PSI) complex. May act as a chaperone-like factor to guide the assembly of the PSI subunits. The protein is Photosystem I assembly protein Ycf3 of Picosynechococcus sp. (strain ATCC 27264 / PCC 7002 / PR-6) (Agmenellum quadruplicatum).